Here is a 273-residue protein sequence, read N- to C-terminus: Ribosomal RNA small subunit methyltransferase A (273 aa).

S-adenosyl-L-methionine contacts are provided by Asn23, Ile25, Gly50, Glu72, Asp97, and Asn116.

It belongs to the class I-like SAM-binding methyltransferase superfamily. rRNA adenine N(6)-methyltransferase family. RsmA subfamily.

The protein localises to the cytoplasm. It carries out the reaction adenosine(1518)/adenosine(1519) in 16S rRNA + 4 S-adenosyl-L-methionine = N(6)-dimethyladenosine(1518)/N(6)-dimethyladenosine(1519) in 16S rRNA + 4 S-adenosyl-L-homocysteine + 4 H(+). Its function is as follows. Specifically dimethylates two adjacent adenosines (A1518 and A1519) in the loop of a conserved hairpin near the 3'-end of 16S rRNA in the 30S particle. May play a critical role in biogenesis of 30S subunits. In Rickettsia akari (strain Hartford), this protein is Ribosomal RNA small subunit methyltransferase A.